Reading from the N-terminus, the 803-residue chain is Phosphoribosylformylglycinamidine synthase subunit PurL (803 aa).

Residue His65 is part of the active site. Residues Tyr68 and Lys107 each coordinate ATP. Glu109 contributes to the Mg(2+) binding site. Residues 110 to 113 (SHNH) and Arg132 each bind substrate. His111 (proton acceptor) is an active-site residue. Asp133 lines the Mg(2+) pocket. Substrate is bound at residue Gln256. Asp284 is a Mg(2+) binding site. 328–330 (ESQ) serves as a coordination point for substrate. 2 residues coordinate ATP: Asn537 and Gly574. A Mg(2+)-binding site is contributed by Asn575. Position 577 (Ser577) interacts with substrate.

It belongs to the FGAMS family. As to quaternary structure, monomer. Part of the FGAM synthase complex composed of 1 PurL, 1 PurQ and 2 PurS subunits.

Its subcellular location is the cytoplasm. It carries out the reaction N(2)-formyl-N(1)-(5-phospho-beta-D-ribosyl)glycinamide + L-glutamine + ATP + H2O = 2-formamido-N(1)-(5-O-phospho-beta-D-ribosyl)acetamidine + L-glutamate + ADP + phosphate + H(+). It functions in the pathway purine metabolism; IMP biosynthesis via de novo pathway; 5-amino-1-(5-phospho-D-ribosyl)imidazole from N(2)-formyl-N(1)-(5-phospho-D-ribosyl)glycinamide: step 1/2. In terms of biological role, part of the phosphoribosylformylglycinamidine synthase complex involved in the purines biosynthetic pathway. Catalyzes the ATP-dependent conversion of formylglycinamide ribonucleotide (FGAR) and glutamine to yield formylglycinamidine ribonucleotide (FGAM) and glutamate. The FGAM synthase complex is composed of three subunits. PurQ produces an ammonia molecule by converting glutamine to glutamate. PurL transfers the ammonia molecule to FGAR to form FGAM in an ATP-dependent manner. PurS interacts with PurQ and PurL and is thought to assist in the transfer of the ammonia molecule from PurQ to PurL. The polypeptide is Phosphoribosylformylglycinamidine synthase subunit PurL (Prochlorococcus marinus (strain NATL2A)).